We begin with the raw amino-acid sequence, 433 residues long: 3-phosphoshikimate 1-carboxyvinyltransferase (433 aa).

3-phosphoshikimate contacts are provided by K23, S24, and R28. Residue K23 coordinates phosphoenolpyruvate. Residues G95 and R123 each contribute to the phosphoenolpyruvate site. 4 residues coordinate 3-phosphoshikimate: S167, Q169, D317, and K344. Position 169 (Q169) interacts with phosphoenolpyruvate. The Proton acceptor role is filled by D317. 2 residues coordinate phosphoenolpyruvate: R348 and R390.

It belongs to the EPSP synthase family. Monomer.

The protein resides in the cytoplasm. The enzyme catalyses 3-phosphoshikimate + phosphoenolpyruvate = 5-O-(1-carboxyvinyl)-3-phosphoshikimate + phosphate. The protein operates within metabolic intermediate biosynthesis; chorismate biosynthesis; chorismate from D-erythrose 4-phosphate and phosphoenolpyruvate: step 6/7. Functionally, catalyzes the transfer of the enolpyruvyl moiety of phosphoenolpyruvate (PEP) to the 5-hydroxyl of shikimate-3-phosphate (S3P) to produce enolpyruvyl shikimate-3-phosphate and inorganic phosphate. The chain is 3-phosphoshikimate 1-carboxyvinyltransferase from Staphylococcus epidermidis (strain ATCC 12228 / FDA PCI 1200).